A 185-amino-acid polypeptide reads, in one-letter code: Lysozyme g (185 aa).

2 cysteine pairs are disulfide-bonded: Cys4–Cys60 and Cys18–Cys29. Residue Glu73 is part of the active site.

Belongs to the glycosyl hydrolase 23 family.

The protein resides in the secreted. The enzyme catalyses Hydrolysis of (1-&gt;4)-beta-linkages between N-acetylmuramic acid and N-acetyl-D-glucosamine residues in a peptidoglycan and between N-acetyl-D-glucosamine residues in chitodextrins.. The protein is Lysozyme g of Cygnus atratus (Black swan).